Reading from the N-terminus, the 431-residue chain is Enolase (431 aa).

Glutamine 167 serves as a coordination point for (2R)-2-phosphoglycerate. Glutamate 209 acts as the Proton donor in catalysis. Residues aspartate 246, glutamate 289, and aspartate 316 each coordinate Mg(2+). The (2R)-2-phosphoglycerate site is built by lysine 341, arginine 370, serine 371, and lysine 392. Lysine 341 (proton acceptor) is an active-site residue.

The protein belongs to the enolase family. In terms of assembly, component of the RNA degradosome, a multiprotein complex involved in RNA processing and mRNA degradation. Mg(2+) is required as a cofactor.

The protein localises to the cytoplasm. It is found in the secreted. The protein resides in the cell surface. The enzyme catalyses (2R)-2-phosphoglycerate = phosphoenolpyruvate + H2O. The protein operates within carbohydrate degradation; glycolysis; pyruvate from D-glyceraldehyde 3-phosphate: step 4/5. Its function is as follows. Catalyzes the reversible conversion of 2-phosphoglycerate (2-PG) into phosphoenolpyruvate (PEP). It is essential for the degradation of carbohydrates via glycolysis. This Shewanella sp. (strain ANA-3) protein is Enolase.